We begin with the raw amino-acid sequence, 641 residues long: Soluble starch synthase 1, chloroplastic/amyloplastic (641 aa).

The N-terminal 113 residues, 1–113, are a transit peptide targeting the chloroplast; sequence MATAAGMGIG…DSIDKTIFVA (113 aa). The disordered stretch occupies residues 62–96; it reads TFLVPTSTPPAPTQSPAPAPTPPPLPDSGVGEIEP. Residues 68–87 are compositionally biased toward pro residues; sequence STPPAPTQSPAPAPTPPPLP. Lys-147 contributes to the ADP-alpha-D-glucose binding site.

It belongs to the glycosyltransferase 1 family. Bacterial/plant glycogen synthase subfamily.

Its subcellular location is the plastid. The protein localises to the chloroplast. It is found in the amyloplast. The catalysed reaction is [(1-&gt;4)-alpha-D-glucosyl](n) + ADP-alpha-D-glucose = [(1-&gt;4)-alpha-D-glucosyl](n+1) + ADP + H(+). It participates in glycan biosynthesis; starch biosynthesis. In Oryza sativa subsp. indica (Rice), this protein is Soluble starch synthase 1, chloroplastic/amyloplastic.